The chain runs to 202 residues: Ribonuclease HII (202 aa).

The RNase H type-2 domain maps to 12–201; sequence LLIAGVDEAG…VRQLKLFIPE (190 aa). Residues Asp18, Glu19, and Asp110 each coordinate a divalent metal cation.

It belongs to the RNase HII family. Mn(2+) serves as cofactor. Requires Mg(2+) as cofactor.

Its subcellular location is the cytoplasm. The catalysed reaction is Endonucleolytic cleavage to 5'-phosphomonoester.. Its function is as follows. Endonuclease that specifically degrades the RNA of RNA-DNA hybrids. This Coxiella burnetii (strain CbuG_Q212) (Coxiella burnetii (strain Q212)) protein is Ribonuclease HII.